A 463-amino-acid chain; its full sequence is Xanthine permease XanP (463 aa).

Transmembrane regions (helical) follow at residues 43–63 (LLAM…ALGL), 71–91 (IISM…KAWG), 93–113 (VGSG…PLIM), 126–146 (PTMM…EMVI), 156–176 (IITP…LIQV), 192–212 (TFGA…IILL), 222–242 (VASL…MGML), 260–280 (LYYG…VFMI), 352–372 (GFVV…SGFV), 379–399 (VLGG…VRIV), 409–429 (ILII…PLIL), and 439–459 (LLSS…LIFP).

Belongs to the nucleobase:cation symporter-2 (NCS2) (TC 2.A.40) family.

It is found in the cell inner membrane. The enzyme catalyses xanthine(in) + H(+)(in) = xanthine(out) + H(+)(out). Its function is as follows. Specific, proton motive force-dependent high-affinity transporter for xanthine. The sequence is that of Xanthine permease XanP (xanP) from Escherichia coli O6:H1 (strain CFT073 / ATCC 700928 / UPEC).